The sequence spans 477 residues: Calcium/calmodulin-dependent protein kinase type 1G (477 aa).

The 255-residue stretch at 23-277 (FIFMEVLGSG…CEKALRHPWI (255 aa)) folds into the Protein kinase domain. Residues 29-37 (LGSGAFSEV) and Lys52 contribute to the ATP site. The Proton acceptor role is filled by Asp143. The segment at 277–317 (IDGNTALHRDIYPSVSLQIQKNFAKSKWRQAFNAAAVVHHM) is autoinhibitory domain. Residues 297–318 (KNFAKSKWRQAFNAAAVVHHMR) are calmodulin-binding. The interval 326–388 (SPSVRQEVEN…SRPSAPSGGR (63 aa)) is disordered. Residues 376–388 (SHSSRPSAPSGGR) show a composition bias toward low complexity.

It belongs to the protein kinase superfamily. CAMK Ser/Thr protein kinase family. CaMK subfamily. Post-translationally, may be prenylated on Cys-474. Highly expressed in brain, in neuronal cell bodies of the central nucleus of amygdala and ventromedial hypothalamic nucleus. Also detected in heart, testis, and kidney.

Its subcellular location is the cytoplasm. It localises to the golgi apparatus membrane. It is found in the cell membrane. It carries out the reaction L-seryl-[protein] + ATP = O-phospho-L-seryl-[protein] + ADP + H(+). The enzyme catalyses L-threonyl-[protein] + ATP = O-phospho-L-threonyl-[protein] + ADP + H(+). Its activity is regulated as follows. Activated by Ca(2+)/calmodulin. Binding of calmodulin is thought to result in a conformational change and leads to activation through phosphorylation by CAMKK1. Functionally, calcium/calmodulin-dependent protein kinase belonging to a proposed calcium-triggered signaling cascade. In vitro phosphorylates transcription factor CREB1. The polypeptide is Calcium/calmodulin-dependent protein kinase type 1G (Camk1g) (Mus musculus (Mouse)).